The sequence spans 357 residues: DNA replication and repair protein RecF (357 aa).

Position 30–37 (30–37 (GANGSGKT)) interacts with ATP.

This sequence belongs to the RecF family.

The protein localises to the cytoplasm. In terms of biological role, the RecF protein is involved in DNA metabolism; it is required for DNA replication and normal SOS inducibility. RecF binds preferentially to single-stranded, linear DNA. It also seems to bind ATP. This Shigella boydii serotype 4 (strain Sb227) protein is DNA replication and repair protein RecF.